The chain runs to 874 residues: Rho GTPase-activating protein 42 (874 aa).

The region spanning 7–262 (EFSDSYLDSP…MKSANQDYRP (256 aa)) is the BAR domain. Residues 225 to 261 (KQQLQFNLQNTRNNFESTRQEVERLMQRMKSANQDYR) are a coiled coil. The 110-residue stretch at 265-374 (QWTMEGYLYV…WLEAMDGKEP (110 aa)) folds into the PH domain. Tyrosine 376 carries the post-translational modification Phosphotyrosine. The Rho-GAP domain maps to 376-572 (YTLPAIISKK…ILIEHYEKIF (197 aa)). Residues 575 to 720 (APDPSIPLPQ…GDVSPPIDLV (146 aa)) are disordered. A compositionally biased stretch (low complexity) spans 620-650 (DSYSSSPDSTPMGSIESLSSHSSEQNSTTKS). Residues 667 to 686 (TPSSSNGQKSLGLWTTSPES) show a composition bias toward polar residues. The residue at position 683 (serine 683) is a Phosphoserine. The span at 687–697 (SSREDATKTDA) shows a compositional bias: basic and acidic residues. A compositionally biased stretch (polar residues) spans 700–711 (DCQSVASVTSPG). A phosphoserine mark is found at serine 740, serine 753, serine 756, and serine 811. Residues 749-762 (SYSGSIQSLTSVGS) show a composition bias toward polar residues. Positions 749–777 (SYSGSIQSLTSVGSKETPKASPNPDLPPK) are disordered. The SH3 domain maps to 816 to 874 (SSGRQAKAMYSCKAEHSHELSFPQGAIFSNVYPSVEPGWLKATYEGKTGLVPENYVVFL). Position 870 is a phosphotyrosine (tyrosine 870).

Highly and selectively expressed in smooth muscle cells.

May influence blood pressure by functioning as a GTPase-activating protein for RHOA in vascular smooth muscle. This chain is Rho GTPase-activating protein 42, found in Homo sapiens (Human).